A 362-amino-acid chain; its full sequence is S-adenosylmethionine:tRNA ribosyltransferase-isomerase (362 aa).

The protein belongs to the QueA family. Monomer.

It localises to the cytoplasm. The enzyme catalyses 7-aminomethyl-7-carbaguanosine(34) in tRNA + S-adenosyl-L-methionine = epoxyqueuosine(34) in tRNA + adenine + L-methionine + 2 H(+). The protein operates within tRNA modification; tRNA-queuosine biosynthesis. Transfers and isomerizes the ribose moiety from AdoMet to the 7-aminomethyl group of 7-deazaguanine (preQ1-tRNA) to give epoxyqueuosine (oQ-tRNA). The chain is S-adenosylmethionine:tRNA ribosyltransferase-isomerase from Deinococcus radiodurans (strain ATCC 13939 / DSM 20539 / JCM 16871 / CCUG 27074 / LMG 4051 / NBRC 15346 / NCIMB 9279 / VKM B-1422 / R1).